The primary structure comprises 326 residues: Tagatose 1,6-diphosphate aldolase 2 (326 aa).

It belongs to the aldolase LacD family.

The catalysed reaction is D-tagatofuranose 1,6-bisphosphate = D-glyceraldehyde 3-phosphate + dihydroxyacetone phosphate. It functions in the pathway carbohydrate metabolism; D-tagatose 6-phosphate degradation; D-glyceraldehyde 3-phosphate and glycerone phosphate from D-tagatose 6-phosphate: step 2/2. This is Tagatose 1,6-diphosphate aldolase 2 (lacD2) from Streptococcus agalactiae serotype III (strain NEM316).